Consider the following 538-residue polypeptide: Transmembrane protein 266 (538 aa).

At 1-102 the chain is on the cytoplasmic side; sequence MALVTSFNMA…VFLLSASLNS (102 aa). Residues 103–123 form a helical membrane-spanning segment; it reads FLVACVILVVILLTLELLIDT. The Extracellular portion of the chain corresponds to 124–130; it reads KLLQFSN. The helical transmembrane segment at 131–151 threads the bilayer; that stretch reads AFQFAGVIHWISLVILSVFFS. Over 152–169 the chain is Cytoplasmic; the sequence is ETVLRIVVLGIWDYIENK. Residues 170 to 190 form a helical membrane-spanning segment; sequence IEVFDGAVIILSLAPMVASTV. The Extracellular segment spans residues 191-199; sequence ANGPRSPWD. The chain crosses the membrane as a helical span at residues 200-220; it reads AISLIIMFRIWRVKRVIDAYV. The Cytoplasmic portion of the chain corresponds to 221 to 538; that stretch reads LPVKLEMEMV…EPKLHTVPEA (318 aa). Residues 232–278 are a coiled coil; sequence QQYEKAKAIQDEQLERLTQICQEQGFEIRQLRAHLAQQDLDLAAERE. Disordered stretches follow at residues 380 to 435 and 453 to 483; these read NSTC…PLPL and SSLSKDPCPSHKALDPAPLAQPTPLGSVQTS. Residues 381-396 show a composition bias toward low complexity; it reads STCASATSETTSHSTC. Positions 397-417 are enriched in polar residues; it reads GSVTRAQSASSQTLGSSTDCS. The span at 425 to 434 shows a compositional bias: low complexity; the sequence is PSKPRSSPLP.

In terms of assembly, homodimer; disulfide-linked. In terms of tissue distribution, in brain, present in the granule layer of the cerebellar cortex. Localizes on the post-synaptic side of glutamatergic mossy fibers and granule cells in the cerebellum (at protein level). Predominantly expressed in granule cells in cerebellum (at protein level).

It is found in the cell projection. The protein localises to the dendrite. Its subcellular location is the perikaryon. The protein resides in the cell membrane. Its function is as follows. Voltage-sensor protein present on the post-synaptic side of glutamatergic mossy fibers and granule cells in the cerebellum. Despite the presence of a voltage-sensor segment, does not form a functional ion channel and its precise role remains unclear. Undergoes both rapid and slow structural rearrangements in response to changes in voltage. Contains a zinc-binding site that can regulate the slow conformational transition. The chain is Transmembrane protein 266 from Mus musculus (Mouse).